The primary structure comprises 94 residues: Bacterial microcompartment shell protein PduA (94 aa).

A BMC domain is found at 5–89 (ALGMVETKGL…PHTDVEKILP (85 aa)).

This sequence belongs to the bacterial microcompartments protein family. As to quaternary structure, homohexamer with a central pore of about 5.6 Angstroms in diameter. The hexamers pack against each other in arrays. Interacts with the N-terminus of PduP which targets PduP to the BMC. Modeling suggests PduC, PduD, PduE, PduL and PduP interact with a cleft formed by the C-terminal segments of 2 adjacent PduA subunits (on the BMC luminal side) in the hexamer.

The protein resides in the bacterial microcompartment. It functions in the pathway polyol metabolism; 1,2-propanediol degradation. One of the major shell proteins of the bacterial microcompartment (BMC) dedicated to 1,2-propanediol (1,2-PD) degradation. At least one of PduA or PduJ is required for BMC assembly; it must be encoded as the first gene in the pdu operon. Not required for structural integrity of BMCs, it is required to mitigate propionaldehyde toxicity. Controls diffusion of 1,2-PD into and propionaldehyde out of the BMC shell; residue 40 is particularly important for pore permeability. Overexpression of this protein leads to aberrant filaments that extend the length of the cell, cross the cleavage furrow and impair division. The filaments form nanotubes with a hollow center. The isolated BMC shell component protein ratio for J:A:B':B:K:T:U is approximately 15:10:7:6:1:1:2. Edge residues (particularly Lys-26) are important for function and assembly of the BMC, and influence array formation by hexamers. Interaction with PduA allows encapsulation of at least PduP in BMCs. Probably also targets PduD to the BMC. PduA is probably the hub for binding multiple enzymes to the interior of the BMC; modeling suggests PduC, PduD, PduE, PduG, PduL and PduP are targeted to PduA. Its function is as follows. The 1,2-PD-specific bacterial microcompartment (BMC) concentrates low levels of 1,2-PD catabolic enzymes, concentrates volatile reaction intermediates thus enhancing pathway flux and keeps the level of toxic, mutagenic propionaldehyde low. This chain is Bacterial microcompartment shell protein PduA, found in Salmonella typhimurium (strain LT2 / SGSC1412 / ATCC 700720).